The sequence spans 382 residues: Queuine tRNA-ribosyltransferase (382 aa).

Residue Asp-89 is the Proton acceptor of the active site. Substrate contacts are provided by residues 89-93 (DSGGF), Asp-143, Gln-187, and Gly-214. The interval 245 to 251 (GVGKPED) is RNA binding. The Nucleophile role is filled by Asp-264. The RNA binding; important for wobble base 34 recognition stretch occupies residues 269–273 (TRNAR). Residues Cys-302, Cys-304, Cys-307, and His-333 each contribute to the Zn(2+) site.

It belongs to the queuine tRNA-ribosyltransferase family. In terms of assembly, homodimer. Within each dimer, one monomer is responsible for RNA recognition and catalysis, while the other monomer binds to the replacement base PreQ1. Zn(2+) serves as cofactor.

It carries out the reaction 7-aminomethyl-7-carbaguanine + guanosine(34) in tRNA = 7-aminomethyl-7-carbaguanosine(34) in tRNA + guanine. Its pathway is tRNA modification; tRNA-queuosine biosynthesis. Functionally, catalyzes the base-exchange of a guanine (G) residue with the queuine precursor 7-aminomethyl-7-deazaguanine (PreQ1) at position 34 (anticodon wobble position) in tRNAs with GU(N) anticodons (tRNA-Asp, -Asn, -His and -Tyr). Catalysis occurs through a double-displacement mechanism. The nucleophile active site attacks the C1' of nucleotide 34 to detach the guanine base from the RNA, forming a covalent enzyme-RNA intermediate. The proton acceptor active site deprotonates the incoming PreQ1, allowing a nucleophilic attack on the C1' of the ribose to form the product. After dissociation, two additional enzymatic reactions on the tRNA convert PreQ1 to queuine (Q), resulting in the hypermodified nucleoside queuosine (7-(((4,5-cis-dihydroxy-2-cyclopenten-1-yl)amino)methyl)-7-deazaguanosine). The sequence is that of Queuine tRNA-ribosyltransferase from Sodalis glossinidius (strain morsitans).